Here is a 314-residue protein sequence, read N- to C-terminus: Methionyl-tRNA formyltransferase (314 aa).

Ser110–Pro113 is a binding site for (6S)-5,6,7,8-tetrahydrofolate.

This sequence belongs to the Fmt family.

It catalyses the reaction L-methionyl-tRNA(fMet) + (6R)-10-formyltetrahydrofolate = N-formyl-L-methionyl-tRNA(fMet) + (6S)-5,6,7,8-tetrahydrofolate + H(+). In terms of biological role, attaches a formyl group to the free amino group of methionyl-tRNA(fMet). The formyl group appears to play a dual role in the initiator identity of N-formylmethionyl-tRNA by promoting its recognition by IF2 and preventing the misappropriation of this tRNA by the elongation apparatus. The sequence is that of Methionyl-tRNA formyltransferase from Bacillus cereus (strain AH187).